The sequence spans 530 residues: AAA-ATPase At3g28510 (530 aa).

A helical transmembrane segment spans residues 5-25 (GAIWGITGTTVTSFMFFWAIY). An ATP-binding site is contributed by 250–257 (GPPGTGKS). Disordered regions lie at residues 312–339 (QRKKKKEEDEEEDGEEKKEGEKKPKVDD) and 463–530 (KARK…KSDS). 2 stretches are compositionally biased toward basic and acidic residues: residues 326–339 (EEKKEGEKKPKVDD) and 463–511 (KARK…KEEN). Polar residues predominate over residues 512 to 523 (GNVSQQNGNSID).

It belongs to the AAA ATPase family. BCS1 subfamily. Mg(2+) is required as a cofactor.

Its subcellular location is the membrane. It catalyses the reaction ATP + H2O = ADP + phosphate + H(+). The sequence is that of AAA-ATPase At3g28510 from Arabidopsis thaliana (Mouse-ear cress).